The primary structure comprises 98 residues: Integration host factor subunit alpha (98 aa).

A disordered region spans residues 49–71; it reads FGNFDLRDKNQRPGRNPKTGEDI.

This sequence belongs to the bacterial histone-like protein family. As to quaternary structure, heterodimer of an alpha and a beta chain.

This protein is one of the two subunits of integration host factor, a specific DNA-binding protein that functions in genetic recombination as well as in transcriptional and translational control. This is Integration host factor subunit alpha from Shewanella amazonensis (strain ATCC BAA-1098 / SB2B).